The primary structure comprises 262 residues: Acyl-[acyl-carrier-protein]--UDP-N-acetylglucosamine O-acyltransferase (262 aa).

The protein belongs to the transferase hexapeptide repeat family. LpxA subfamily. In terms of assembly, homotrimer.

It localises to the cytoplasm. It catalyses the reaction a (3R)-hydroxyacyl-[ACP] + UDP-N-acetyl-alpha-D-glucosamine = a UDP-3-O-[(3R)-3-hydroxyacyl]-N-acetyl-alpha-D-glucosamine + holo-[ACP]. It functions in the pathway glycolipid biosynthesis; lipid IV(A) biosynthesis; lipid IV(A) from (3R)-3-hydroxytetradecanoyl-[acyl-carrier-protein] and UDP-N-acetyl-alpha-D-glucosamine: step 1/6. Its function is as follows. Involved in the biosynthesis of lipid A, a phosphorylated glycolipid that anchors the lipopolysaccharide to the outer membrane of the cell. This is Acyl-[acyl-carrier-protein]--UDP-N-acetylglucosamine O-acyltransferase from Vibrio campbellii (strain ATCC BAA-1116).